Here is a 104-residue protein sequence, read N- to C-terminus: Interferon alpha-inducible protein 27-like protein 1 (104 aa).

3 helical membrane passes run 14-34, 59-79, and 81-101; these read VAAVVGGVVAVGTVLVALSAM, GGGVAAGSLVAILQSVGAAGL, and VTSKVIGGFAGTALGAWLGSP.

The protein belongs to the IFI6/IFI27 family.

Its subcellular location is the membrane. Functionally, plays a role in the apoptotic process and has a pro-apoptotic activity. The sequence is that of Interferon alpha-inducible protein 27-like protein 1 from Homo sapiens (Human).